The chain runs to 707 residues: 65-kDa microtubule-associated protein 3 (707 aa).

5 coiled-coil regions span residues 49–84 (LEVYRRKVDQANRCRAQLRQAIADAEAQLAAICSAM), 157–179 (NLSMRKLEELHCQLQVLQKEKID), 269–289 (QQEYQHITCNIAASEHEITEA), 354–374 (IVDATMVLEHLEQHISKIKEE), and 464–486 (LEEYNILRQEREEEHRRQRDQKK). Residues 495–574 (QEALYGSKPS…PSRKQSMNPS (80 aa)) form a disordered region. The span at 500-512 (GSKPSPSKPLGGK) shows a compositional bias: low complexity. 2 positions are modified to phosphoserine: serine 504 and serine 528.

This sequence belongs to the MAP65/ASE1 family. Forms a dimer. Binds to microtubules (MT) during cell division. Bundles polymerized MT via the formation of 25-nm crossbridges with centrally located endocytic MT, and midline phragmoplast MT. Expressed in all tissues enriched in dividing cells, such as the root and shoot apical meristem, foliar primordia, and young leaves, and embryos.

The protein localises to the nucleus. The protein resides in the cytoplasm. It is found in the cytoskeleton. Its subcellular location is the phragmoplast. Functionally, microtubule-associated protein that plays a critical role in organizing the mitotic microtubule array during both early and late mitosis in all plant organs. Essential for the cytokinesis, especially in roots, by maintaining the integrity of the overlapped microtubules in the phragmoplast. Required during root morphogenesis. Needed for giant cell development during root knot nematode infection, where cytokinesis is initiated but not completed. In Arabidopsis thaliana (Mouse-ear cress), this protein is 65-kDa microtubule-associated protein 3 (MAP65-3).